Here is a 274-residue protein sequence, read N- to C-terminus: Small ribosomal subunit protein uS3 (274 aa).

In terms of domain architecture, KH type-2 spans 38–106; that stretch reads IRRLLSSGLE…QVQLNILEVK (69 aa). The segment at 215–274 is disordered; it reads AAAAPAGADRPRRERPSGTRPRRSGASGTTATGTDAGRAAGGEEAAPDAAAPVEAQSTES. The span at 238–266 shows a compositional bias: low complexity; that stretch reads SGASGTTATGTDAGRAAGGEEAAPDAAAP.

It belongs to the universal ribosomal protein uS3 family. In terms of assembly, part of the 30S ribosomal subunit. Forms a tight complex with proteins S10 and S14.

In terms of biological role, binds the lower part of the 30S subunit head. Binds mRNA in the 70S ribosome, positioning it for translation. The polypeptide is Small ribosomal subunit protein uS3 (Mycobacterium tuberculosis (strain ATCC 25177 / H37Ra)).